Reading from the N-terminus, the 376-residue chain is Succinyl-diaminopimelate desuccinylase (376 aa).

His-67 contributes to the Zn(2+) binding site. Residue Asp-69 is part of the active site. Asp-100 provides a ligand contact to Zn(2+). Glu-134 (proton acceptor) is an active-site residue. The Zn(2+) site is built by Glu-135, Glu-163, and His-349.

Belongs to the peptidase M20A family. DapE subfamily. In terms of assembly, homodimer. Zn(2+) serves as cofactor. Co(2+) is required as a cofactor.

The catalysed reaction is N-succinyl-(2S,6S)-2,6-diaminopimelate + H2O = (2S,6S)-2,6-diaminopimelate + succinate. Its pathway is amino-acid biosynthesis; L-lysine biosynthesis via DAP pathway; LL-2,6-diaminopimelate from (S)-tetrahydrodipicolinate (succinylase route): step 3/3. Its function is as follows. Catalyzes the hydrolysis of N-succinyl-L,L-diaminopimelic acid (SDAP), forming succinate and LL-2,6-diaminopimelate (DAP), an intermediate involved in the bacterial biosynthesis of lysine and meso-diaminopimelic acid, an essential component of bacterial cell walls. The chain is Succinyl-diaminopimelate desuccinylase from Haemophilus ducreyi (strain 35000HP / ATCC 700724).